The primary structure comprises 660 residues: Chaperone protein DnaK (660 aa).

Position 201 is a phosphothreonine; by autocatalysis (Thr-201). Residues 599 to 660 (EAMQAQSASA…ADVEIVDKPE (62 aa)) are disordered. Residues 600–617 (AMQAQSASAAASSAANAQ) show a composition bias toward low complexity.

Belongs to the heat shock protein 70 family.

Acts as a chaperone. This Chlamydia trachomatis serovar A (strain ATCC VR-571B / DSM 19440 / HAR-13) protein is Chaperone protein DnaK.